Consider the following 1029-residue polypeptide: Multiple C2 domain and transmembrane region protein 6 (1029 aa).

Positions 1–111 (MNKLVVEIVD…SGVQRYPLDK (111 aa)) constitute a C2 1 domain. The tract at residues 187 to 224 (TKKKEKESRTFHSIGAHAGGGGGAPPMSQAKQAYPPPP) is disordered. C2 domains follow at residues 277 to 398 (RSSG…PQWY), 437 to 562 (RVSH…PRWF), and 605 to 727 (FSSD…THFY). Ca(2+) is bound by residues aspartate 310, aspartate 316, aspartate 363, aspartate 365, and aspartate 371. A run of 2 helical transmembrane segments spans residues 864 to 884 (LILVCYPELILPTVFLYLFVI) and 976 to 996 (FALIWAVFIYVTPFQVIAIII).

Belongs to the MCTP family. It depends on Ca(2+) as a cofactor. As to expression, expressed in the vascular tissues of cotyledons and rosette leaves. Accumulates in roots caps and shoot apical meristems (SAMs). Observed in flowers.

The protein localises to the cell membrane. It localises to the cytoplasm. The protein resides in the endosome membrane. Its function is as follows. Regulates flowering time under long days. May function as a signaling molecule by regulating the trafficking of other regulators. This Arabidopsis thaliana (Mouse-ear cress) protein is Multiple C2 domain and transmembrane region protein 6.